Reading from the N-terminus, the 82-residue chain is Omega-conotoxin-like TxO6 (82 aa).

An N-terminal signal peptide occupies residues 1–22; that stretch reads MKLTCVVIVAVLFLTAWTLVMA. The propeptide occupies 23–50; the sequence is DDSNNGLANLFSKSRDEMEDPEAAKLEK. Cystine bridges form between Cys53/Cys71, Cys60/Cys76, and Cys70/Cys81.

The protein belongs to the conotoxin O1 superfamily. Expressed by the venom duct.

It localises to the secreted. In terms of biological role, omega-conotoxins act at presynaptic membranes, they bind and block voltage-gated calcium channels (Cav). The polypeptide is Omega-conotoxin-like TxO6 (Conus textile (Cloth-of-gold cone)).